The following is a 260-amino-acid chain: Ubiquinone/menaquinone biosynthesis C-methyltransferase UbiE (260 aa).

S-adenosyl-L-methionine is bound by residues Thr83, Asp104, and 132 to 133 (NA).

Belongs to the class I-like SAM-binding methyltransferase superfamily. MenG/UbiE family.

The enzyme catalyses a 2-demethylmenaquinol + S-adenosyl-L-methionine = a menaquinol + S-adenosyl-L-homocysteine + H(+). The catalysed reaction is a 2-methoxy-6-(all-trans-polyprenyl)benzene-1,4-diol + S-adenosyl-L-methionine = a 5-methoxy-2-methyl-3-(all-trans-polyprenyl)benzene-1,4-diol + S-adenosyl-L-homocysteine + H(+). It functions in the pathway quinol/quinone metabolism; menaquinone biosynthesis; menaquinol from 1,4-dihydroxy-2-naphthoate: step 2/2. The protein operates within cofactor biosynthesis; ubiquinone biosynthesis. In terms of biological role, methyltransferase required for the conversion of demethylmenaquinol (DMKH2) to menaquinol (MKH2) and the conversion of 2-polyprenyl-6-methoxy-1,4-benzoquinol (DDMQH2) to 2-polyprenyl-3-methyl-6-methoxy-1,4-benzoquinol (DMQH2). This chain is Ubiquinone/menaquinone biosynthesis C-methyltransferase UbiE, found in Bartonella henselae (strain ATCC 49882 / DSM 28221 / CCUG 30454 / Houston 1) (Rochalimaea henselae).